The chain runs to 474 residues: MNSFKEEYRVPIFNLIKNCYTRTCQDLLSLGNEDANQLSVDLKKLFFMYNKKQFNQLKNIHESIYKLTWNKLLKQGGWEHICLRESFIMGQLAGITYWYTQNDLIKTLEICDQSFIMGAPKELLLPIMDELSKKQTTTTTSTSPTIPMILDENVNFSKFPIIDKNHEIKVIECGKNNGGASGSGGDYLNEFSIFKNQHLNTMTPCIIKGDANNWECINKWKDLNYFLSNHGNRIVPIELGHNKLDSKTKKQQQQQQTTTTTANNDNDNSIDWSEKLMKLKDFIEEYMIPSSKDNDSTATESSKVAYLAQHGLIEQLPSLLDDFKFPLFLQTTGDAKVHETEEEGISPHIWLGTGNTITPLHFDSYDNFLTQIVGYKYVRLYPQNQISNLYLKKDQGDSDDNNLVKNSKTAQNNISFVDFEDTDFEKYPLLKIANQHYTECILGPGDILFMPSGYFHYVRSLSTSLSLSFWFIKK.

The interval 247–269 (KTKKQQQQQQTTTTTANNDNDNS) is disordered. The segment covering 251–261 (QQQQQQTTTTT) has biased composition (low complexity). The JmjC domain maps to 305-474 (AYLAQHGLIE…LSLSFWFIKK (170 aa)).

The polypeptide is JmjC domain-containing protein F (jcdF) (Dictyostelium discoideum (Social amoeba)).